The chain runs to 941 residues: MutS protein homolog 1 (941 aa).

747–754 (GPNMAGKS) is a binding site for ATP.

This sequence belongs to the DNA mismatch repair MutS family.

Its subcellular location is the cytoplasm. The protein localises to the mitochondrion. Functionally, involved in mitochondrial DNA repair. The sequence is that of MutS protein homolog 1 (msh1) from Schizosaccharomyces pombe (strain 972 / ATCC 24843) (Fission yeast).